The following is a 493-amino-acid chain: Glutamyl-tRNA(Gln) amidotransferase subunit A (493 aa).

Active-site charge relay system residues include Lys79 and Ser159. Ser183 serves as the catalytic Acyl-ester intermediate.

Belongs to the amidase family. GatA subfamily. Heterotrimer of A, B and C subunits.

It carries out the reaction L-glutamyl-tRNA(Gln) + L-glutamine + ATP + H2O = L-glutaminyl-tRNA(Gln) + L-glutamate + ADP + phosphate + H(+). Allows the formation of correctly charged Gln-tRNA(Gln) through the transamidation of misacylated Glu-tRNA(Gln) in organisms which lack glutaminyl-tRNA synthetase. The reaction takes place in the presence of glutamine and ATP through an activated gamma-phospho-Glu-tRNA(Gln). This chain is Glutamyl-tRNA(Gln) amidotransferase subunit A, found in Rhizobium leguminosarum bv. trifolii (strain WSM2304).